Consider the following 625-residue polypeptide: Dopamine beta-hydroxylase (625 aa).

Residues 1–9 (MQVPSPSAR) are Cytoplasmic-facing. The helical; Signal-anchor for type II membrane protein transmembrane segment at 10-30 (EAASMYGTAVAVFLVLLVAVL) threads the bilayer. The Intragranular portion of the chain corresponds to 31–625 (QGLAPPESPL…TVVNIGGGKV (595 aa)). The region spanning 50-166 (GDLELSWDVS…GTVHLVYGVL (117 aa)) is the DOMON domain. Cystine bridges form between Cys147-Cys604, Cys224-Cys275, Cys261-Cys287, Cys382-Cys495, Cys386-Cys573, and Cys458-Cys480. Residue Asn177 is glycosylated (N-linked (GlcNAc...) asparagine). Tyr222 is an active-site residue. Residues His254 and His255 each contribute to the Cu(2+) site. Residue Asn315 is glycosylated (N-linked (GlcNAc...) asparagine). Positions 325, 404, 406, and 479 each coordinate Cu(2+). The active site involves His404. N-linked (GlcNAc...) asparagine glycosylation occurs at Asn574.

This sequence belongs to the copper type II ascorbate-dependent monooxygenase family. In terms of assembly, homotetramer; composed of two disulfide-linked dimers. It depends on Cu(2+) as a cofactor. Post-translationally, proteolytic cleavage after the membrane-anchor leads to the release of the soluble form. In terms of processing, N-glycosylated.

The protein localises to the cytoplasmic vesicle. It is found in the secretory vesicle lumen. It localises to the secretory vesicle. The protein resides in the chromaffin granule lumen. Its subcellular location is the secreted. The protein localises to the secretory vesicle membrane. It is found in the chromaffin granule membrane. It carries out the reaction dopamine + 2 L-ascorbate + O2 = (R)-noradrenaline + 2 monodehydro-L-ascorbate radical + H2O. It participates in catecholamine biosynthesis; (R)-noradrenaline biosynthesis; (R)-noradrenaline from dopamine: step 1/1. Catalyzes the hydroxylation of dopamine to noradrenaline (also known as norepinephrine), and is thus vital for regulation of these neurotransmitters. The protein is Dopamine beta-hydroxylase (DBH) of Canis lupus familiaris (Dog).